A 155-amino-acid chain; its full sequence is SsrA-binding protein (155 aa).

Belongs to the SmpB family.

It is found in the cytoplasm. Required for rescue of stalled ribosomes mediated by trans-translation. Binds to transfer-messenger RNA (tmRNA), required for stable association of tmRNA with ribosomes. tmRNA and SmpB together mimic tRNA shape, replacing the anticodon stem-loop with SmpB. tmRNA is encoded by the ssrA gene; the 2 termini fold to resemble tRNA(Ala) and it encodes a 'tag peptide', a short internal open reading frame. During trans-translation Ala-aminoacylated tmRNA acts like a tRNA, entering the A-site of stalled ribosomes, displacing the stalled mRNA. The ribosome then switches to translate the ORF on the tmRNA; the nascent peptide is terminated with the 'tag peptide' encoded by the tmRNA and targeted for degradation. The ribosome is freed to recommence translation, which seems to be the essential function of trans-translation. This chain is SsrA-binding protein, found in Bacillus mycoides (strain KBAB4) (Bacillus weihenstephanensis).